A 119-amino-acid chain; its full sequence is Flagellar transcriptional regulator FlhD (119 aa).

Belongs to the FlhD family. Homodimer; disulfide-linked. Forms a heterohexamer composed of two FlhC and four FlhD subunits. Each FlhC binds a FlhD dimer, forming a heterotrimer, and a hexamer assembles by dimerization of two heterotrimers.

It is found in the cytoplasm. In terms of biological role, functions in complex with FlhC as a master transcriptional regulator that regulates transcription of several flagellar and non-flagellar operons by binding to their promoter region. Activates expression of class 2 flagellar genes, including fliA, which is a flagellum-specific sigma factor that turns on the class 3 genes. Also regulates genes whose products function in a variety of physiological pathways. The polypeptide is Flagellar transcriptional regulator FlhD (Serratia marcescens).